Here is a 100-residue protein sequence, read N- to C-terminus: Urease subunit gamma (100 aa).

The protein belongs to the urease gamma subunit family. As to quaternary structure, heterotrimer of UreA (gamma), UreB (beta) and UreC (alpha) subunits. Three heterotrimers associate to form the active enzyme.

It is found in the cytoplasm. The catalysed reaction is urea + 2 H2O + H(+) = hydrogencarbonate + 2 NH4(+). It participates in nitrogen metabolism; urea degradation; CO(2) and NH(3) from urea (urease route): step 1/1. This Thioalkalivibrio sulfidiphilus (strain HL-EbGR7) protein is Urease subunit gamma.